The sequence spans 498 residues: MALPTLPSYWCSQQRLNQQLARQREQEARLRQQWEQNSRYFRMSDICSSKQAEWSSKTSYQRSMHAYQREKMKEEKRRSLEARREKLRQLMQEEQDLLARELEELRLSMNLQERRIREQHGKLKSAKEEQRKLIAEQLLYEHWKKNNPKLREMELDLHQKHVVNSWEMQKEEKKQQEATAEQENKRYENEYERARREALERMKAEEERRQLEDKLQAEALLQQMEELKLKEVEATKLKKEQENLLKQRWELERLEEERKQMEAFRQKAELGRFLRHQYNAQLSRRTQQIQEELEADRRILQALLEKEDESQRLHLARREQVMADVAWMKQAIEEQLQLERAREAELQMLLREEAKEMWEKREAEWARERSARDRLMSEVLTGRQQQIQEKIEQNRRAQEESLKHREQLIRNLEEVRELARREKEESEKLKSARKQELEAQVAERRLQAWEADQQEEEEEEEARRVEQLSDALLQQEAETMAEQGYRPKPYGHPKIAWN.

Positions 11-39 (CSQQRLNQQLARQREQEARLRQQWEQNSR) form a coiled coil. Glycyl lysine isopeptide (Lys-Gly) (interchain with G-Cter in ubiquitin) cross-links involve residues Lys-50 and Lys-57. Coiled coils occupy residues 66–136 (AYQR…LIAE), 163–353 (VNSW…LREE), and 380–479 (LTGR…EAET). The tract at residues 73–498 (KEEKRRSLEA…PYGHPKIAWN (426 aa)) is interaction with keratin proteins. Positions 167 to 189 (EMQKEEKKQQEATAEQENKRYEN) are disordered. Positions 168 to 189 (MQKEEKKQQEATAEQENKRYEN) are enriched in basic and acidic residues. The trichohyalin/plectin homology domain stretch occupies residues 259-425 (KQMEAFRQKA…RELARREKEE (167 aa)). Residues 447–498 (QAWEADQQEEEEEEEARRVEQLSDALLQQEAETMAEQGYRPKPYGHPKIAWN) form a disordered region.

Belongs to the TCHP family. In terms of assembly, interacts specifically with keratin proteins including, KRT5, KRT6A, KRT8, KRT14, KRT16 and KRT18. Interacts with KCTD17. In terms of processing, ubiquitinated. Ubiquitination by the BCR(KCTD17) E3 ubiquitin ligase complex results in proteasomal degradation, and induces ciliogenesis. As to expression, expressed at high levels in normal urothelial and breast epithelial cells. Also expressed in the smooth muscle and endothelial cells. Reduced expression seen in advanced bladder and breast carcinomas (at protein level). Ubiquitous. Expressed at highest levels in the heart, skeletal muscle, kidney, liver and testis.

Its subcellular location is the cytoplasm. It is found in the cytoskeleton. The protein localises to the cell membrane. It localises to the mitochondrion. The protein resides in the cell junction. Its subcellular location is the desmosome. It is found in the microtubule organizing center. The protein localises to the centrosome. Tumor suppressor which has the ability to inhibit cell growth and be pro-apoptotic during cell stress. Inhibits cell growth in bladder and prostate cancer cells by a down-regulation of HSPB1 by inhibiting its phosphorylation. May act as a 'capping' or 'branching' protein for keratin filaments in the cell periphery. May regulate K8/K18 filament and desmosome organization mainly at the apical or peripheral regions of simple epithelial cells. Is a negative regulator of ciliogenesis. The chain is Trichoplein keratin filament-binding protein from Homo sapiens (Human).